The sequence spans 252 residues: tRNA (guanine-N(1)-)-methyltransferase (252 aa).

Residues G113 and V133 to L138 each bind S-adenosyl-L-methionine.

It belongs to the RNA methyltransferase TrmD family. As to quaternary structure, homodimer.

The protein localises to the cytoplasm. It carries out the reaction guanosine(37) in tRNA + S-adenosyl-L-methionine = N(1)-methylguanosine(37) in tRNA + S-adenosyl-L-homocysteine + H(+). Its function is as follows. Specifically methylates guanosine-37 in various tRNAs. In Francisella tularensis subsp. holarctica (strain FTNF002-00 / FTA), this protein is tRNA (guanine-N(1)-)-methyltransferase.